We begin with the raw amino-acid sequence, 657 residues long: Iron-sulfur cluster biogenesis chaperone, mitochondrial (657 aa).

Belongs to the heat shock protein 70 family. Interacts with the Fe/S cluster assembly proteins ISU1, MGE1, GRX5 and JAC1.

The protein resides in the mitochondrion matrix. It carries out the reaction ATP + H2O = ADP + phosphate + H(+). Functionally, required for the assembly of iron-sulfur (Fe/S) clusters in mitochondria. Assisted by the DnaJ-like co-chaperone JAC1 and the nucleotide exchange factor MGE1, it mediates ATP-dependent Fe-S cluster transfer from the scaffold proteins ISU1/ISU2 to GRX5. This chain is Iron-sulfur cluster biogenesis chaperone, mitochondrial, found in Saccharomyces cerevisiae (strain ATCC 204508 / S288c) (Baker's yeast).